Consider the following 477-residue polypeptide: Trigger factor (477 aa).

Positions 169–254 constitute a PPIase FKBP-type domain; the sequence is EDRVTIDYLG…VKEVAKPNEL (86 aa). The disordered stretch occupies residues 435–477; it reads VSKEELTAEDEDAASEAKPAKKAAAKKKAAPKKKAEEGKSEEA. Residues 454–466 are compositionally biased toward basic residues; that stretch reads AKKAAAKKKAAPK. Over residues 467–477 the composition is skewed to basic and acidic residues; the sequence is KKAEEGKSEEA.

It belongs to the FKBP-type PPIase family. Tig subfamily.

It is found in the cytoplasm. The catalysed reaction is [protein]-peptidylproline (omega=180) = [protein]-peptidylproline (omega=0). Involved in protein export. Acts as a chaperone by maintaining the newly synthesized protein in an open conformation. Functions as a peptidyl-prolyl cis-trans isomerase. The protein is Trigger factor of Brucella suis biovar 1 (strain 1330).